The following is a 746-amino-acid chain: MGRNQKQNFFAARKRQKRENGPKRTDRQAQPYEEIKRDNAFFIKYYQLQKICATDEEWTQFLASIRDNLPTTFRVTGFKDEAKALLSIIETQLFTEYVRAVAELHQKAPEDVERPLCLPWYPNGLAYQLHLTRKDIRRSEPLYRLHNFLIVETTAGGISRQEAVSMIPPIVLDVRPTDKVLDMCAAPGSKTAQLIEALHAAPEEHKIPPGFVLANDVDNNRCYMLVHQAKRLNSPCLLVTNHDSSVFPNLVTTKPDGSKAILKFDKILCDVPCSGDGTLRKNPDIWLKWNLAQAYNLHGIQYRIVRRGAEMLEVGGRLVYSTCSLNPIENEAVLQRIIKDADGALELVDAGHLVPGLKYKPGMTDWKLATKEVDQIFTRFEEVPESLHTIIRPGMFPLPADEMAKIGLEKCLRVLPHLQDSGGFFVAVLEKRRQLSFEKNDVVELVKLNETAKQPAAEPQVDADGKPIEEKSVPWGPQRKKRRLHGYKEDPYVFFGENDPDYQAIKEFYQLDESLSQRCLLTRCVTEKKKNIYYCSEPIRDLVLNNENNIKIINTGVKTFVRCENRHTVHPFRLAQEGLQTSNAFMGASRRIQVEREDLVMMLNCTDPTQPPSTHELKKETQERCKELGVGSCILKYVDQRFTLYTVGWRGTSSLRAYVQKDETIHILRLLGADLSKFETNKYEDARVAAAAAADAEVGKSAEAEADSSGDGDATESTFSGSGAIDVTVAAETTGTPMDTEVVATS.

The segment at 1 to 30 (MGRNQKQNFFAARKRQKRENGPKRTDRQAQ) is disordered. Residues 18 to 30 (RENGPKRTDRQAQ) show a composition bias toward basic and acidic residues. Residues 184–190 (CAAPGSK), Asp-216, Asp-243, and Asp-270 contribute to the S-adenosyl-L-methionine site. Cys-323 functions as the Nucleophile in the catalytic mechanism. Disordered regions lie at residues 454–475 (QPAA…SVPW) and 701–746 (SAEA…VATS). Residues 463 to 472 (ADGKPIEEKS) show a composition bias toward basic and acidic residues. The span at 704–714 (AEADSSGDGDA) shows a compositional bias: acidic residues. The segment covering 731 to 746 (AETTGTPMDTEVVATS) has biased composition (polar residues).

It belongs to the class I-like SAM-binding methyltransferase superfamily. RsmB/NOP family. TRM4 subfamily. In terms of tissue distribution, ubiquitously expressed during embryonic development. Some enrichment is observed in the proventriculus area of the foregut and in the hindgut.

Its subcellular location is the nucleus. It is found in the nucleolus. It catalyses the reaction cytidine(34) in tRNA precursor + S-adenosyl-L-methionine = 5-methylcytidine(34) in tRNA precursor + S-adenosyl-L-homocysteine + H(+). Its function is as follows. RNA methyltransferase that methylates tRNAs. Methylates cytosine to 5-methylcytosine (m5C) at position 34 of intron-containing tRNA(Leu)(CAA) precursors. Required for short-term memory. The protein is tRNA (cytosine(34)-C(5))-methyltransferase of Drosophila melanogaster (Fruit fly).